Here is a 701-residue protein sequence, read N- to C-terminus: Elongation factor G (701 aa).

Positions 8 to 286 constitute a tr-type G domain; sequence ERIRNIGIIA…AVVYYLPSPV (279 aa). GTP-binding positions include 17 to 24, 85 to 89, and 139 to 142; these read AHIDAGKT, DTPGH, and NKMD.

Belongs to the TRAFAC class translation factor GTPase superfamily. Classic translation factor GTPase family. EF-G/EF-2 subfamily.

Its subcellular location is the cytoplasm. In terms of biological role, catalyzes the GTP-dependent ribosomal translocation step during translation elongation. During this step, the ribosome changes from the pre-translocational (PRE) to the post-translocational (POST) state as the newly formed A-site-bound peptidyl-tRNA and P-site-bound deacylated tRNA move to the P and E sites, respectively. Catalyzes the coordinated movement of the two tRNA molecules, the mRNA and conformational changes in the ribosome. The sequence is that of Elongation factor G from Roseiflexus castenholzii (strain DSM 13941 / HLO8).